A 314-amino-acid chain; its full sequence is DNA-directed RNA polymerase subunit alpha (314 aa).

The segment at 1–229 is alpha N-terminal domain (alpha-NTD); that stretch reads MLESKLKAPV…EHLNYFANPE (229 aa). The segment at 246-314 is alpha C-terminal domain (alpha-CTD); it reads SAEEDLDLPL…LAKKGFTLKE (69 aa).

The protein belongs to the RNA polymerase alpha chain family. As to quaternary structure, homodimer. The RNAP catalytic core consists of 2 alpha, 1 beta, 1 beta' and 1 omega subunit. When a sigma factor is associated with the core the holoenzyme is formed, which can initiate transcription.

It carries out the reaction RNA(n) + a ribonucleoside 5'-triphosphate = RNA(n+1) + diphosphate. Its function is as follows. DNA-dependent RNA polymerase catalyzes the transcription of DNA into RNA using the four ribonucleoside triphosphates as substrates. The protein is DNA-directed RNA polymerase subunit alpha (rpoA) of Thermus aquaticus.